A 105-amino-acid chain; its full sequence is Precursor of CEP15 (105 aa).

A signal peptide spans 1 to 29; that stretch reads MDATKIKFDVILLSFLLIISGIPSNLGLS. The propeptide occupies 30 to 90; it reads TSVRGTTRSE…PSPPVPDYDD (61 aa). The segment covering 68–80 has biased composition (low complexity); sequence DYYDGGSSSSTTS. The segment at 68 to 105 is disordered; it reads DYYDGGSSSSTTSPSPPVPDYDDIYRRQGDVPSPGIGH. P99 and P101 each carry hydroxyproline.

The protein belongs to the C-terminally encoded plant signaling peptide (CEP) family. As to quaternary structure, interacts with CEP receptors (e.g. CEPR1 and CEPR2). The mature small signaling peptide is generated by proteolytic processing of the longer precursor.

It is found in the secreted. The protein localises to the extracellular space. The protein resides in the apoplast. Functionally, extracellular signaling peptide that may regulate primary root growth rate and systemic nitrogen (N)-demand signaling. The polypeptide is Precursor of CEP15 (Arabidopsis thaliana (Mouse-ear cress)).